The sequence spans 254 residues: Type II methyl-directed restriction enzyme DpnI (254 aa).

This sequence belongs to the DpnI type II restriction endonuclease family.

The enzyme catalyses Endonucleolytic cleavage of DNA to give specific double-stranded fragments with terminal 5'-phosphates.. Functionally, an M and P subtype restriction enzyme that recognizes the double-stranded, methylated sequence 5'-G(Me)ATC-3' and cleaves after A-2. This Streptococcus pneumoniae serotype 4 (strain ATCC BAA-334 / TIGR4) protein is Type II methyl-directed restriction enzyme DpnI.